A 149-amino-acid chain; its full sequence is Probable flagellum biosynthesis repressor protein FlbT (149 aa).

The protein belongs to the FlbT family.

Its function is as follows. Has a post-transcriptional repressor function in flagellum biogenesis. Associates with the 5'-UTR of fljK mRNA and promotes its degradation. The polypeptide is Probable flagellum biosynthesis repressor protein FlbT (Allorhizobium ampelinum (strain ATCC BAA-846 / DSM 112012 / S4) (Agrobacterium vitis (strain S4))).